The sequence spans 171 residues: CASP-like protein 0U2 (171 aa).

The Cytoplasmic segment spans residues 1-22 (MPVFGLAALKLNWEALSTPKFR). Residues 23 to 42 (VTFAQWVCSLLMWSLMASYS) form a helical membrane-spanning segment. The Extracellular segment spans residues 43–48 (KHGEFK). A helical membrane pass occupies residues 49-69 (FVVVFGLVMWGLASTYLVYQL). The Cytoplasmic segment spans residues 70 to 77 (LNGPPLAP). A helical transmembrane segment spans residues 78–98 (IVEFWANVAAGSLAFICLVLA). The Extracellular segment spans residues 99 to 121 (SATCNRAVGEPQTKVCSGELKPK). The chain crosses the membrane as a helical span at residues 122-142 (ASAAFAFLLLCAYGGLAYLSW). Residues 143–171 (RTWRNPPTIASYALHDDPEFAQPLHSSHK) lie on the Cytoplasmic side of the membrane.

It belongs to the Casparian strip membrane proteins (CASP) family. Homodimer and heterodimers.

The protein localises to the cell membrane. This Chlorokybus atmophyticus (Soil alga) protein is CASP-like protein 0U2.